Reading from the N-terminus, the 503-residue chain is Aminoaldehyde dehydrogenase 1, peroxisomal (503 aa).

The Na(+) site is built by Ile28, Asp99, and Leu189. Residue 238-245 coordinates NAD(+); the sequence is GSTMTGSK. The active-site Proton acceptor is Glu260. NAD(+) is bound by residues Cys294 and Glu393. Cys294 serves as the catalytic Nucleophile.

Belongs to the aldehyde dehydrogenase family. As to expression, expressed in leaves, flowers and fruits.

It localises to the cytoplasm. Its subcellular location is the cytosol. The enzyme catalyses 4-aminobutanal + NAD(+) + H2O = 4-aminobutanoate + NADH + 2 H(+). The catalysed reaction is 3-aminopropanal + NAD(+) + H2O = beta-alanine + NADH + 2 H(+). The protein operates within amine and polyamine biosynthesis; betaine biosynthesis via choline pathway; betaine from betaine aldehyde: step 1/1. In terms of biological role, dehydrogenase that catalyzes the oxidation of several aminoaldehydes. Metabolizes and detoxifies aldehyde products of polyamine degradation to non-toxic amino acids. Catalyzes the oxidation of 4-aminobutanal and 3-aminopropanal to 4-aminobutanoate and beta-alanine, respectively. This Malus domestica (Apple) protein is Aminoaldehyde dehydrogenase 1, peroxisomal.